The primary structure comprises 47 residues: Protein YqhI (47 aa).

The chain is Protein YqhI from Escherichia coli (strain K12).